Here is a 1427-residue protein sequence, read N- to C-terminus: A disintegrin and metalloproteinase with thrombospondin motifs 13 (1427 aa).

A signal peptide spans 1-29 (MHQRHPRARCPPLCVAGILACGFLLGCWG). The propeptide occupies 30–74 (PSHFQQSCLQALEPQAVSSYLSPGAPLKGRPPSPGFQRQRQRQRR). Residues 51–70 (SPGAPLKGRPPSPGFQRQRQ) form a disordered region. A Peptidase M12B domain is found at 80-286 (LHLELLVAVG…GRARCVWDPP (207 aa)). Position 83 (Glu83) interacts with Ca(2+). Residues Asn142 and Asn146 are each glycosylated (N-linked (GlcNAc...) asparagine). 3 disulfides stabilise this stretch: Cys155/Cys208, Cys202/Cys281, and Cys242/Cys265. Positions 173, 182, 184, 187, and 212 each coordinate Ca(2+). His224 contacts Zn(2+). The active site involves Glu225. His228 and His234 together coordinate Zn(2+). Ca(2+) contacts are provided by Cys281 and Asp284. One can recognise a Disintegrin domain in the interval 287 to 383 (RPQPGSAGHP…LVELTPIAAV (97 aa)). Intrachain disulfides connect Cys311–Cys337, Cys322–Cys347, Cys332–Cys366, and Cys360–Cys371. In terms of domain architecture, TSP type-1 1 spans 384–439 (HGRWSSWGPRSPCSRSCGGGVVTRRRQCNNPRPAFGGRACVGADLQAEMCNTQACE). A C-linked (Man) tryptophan glycan is attached at Trp387. Cystine bridges form between Cys396–Cys433, Cys400–Cys438, Cys411–Cys423, Cys450–Cys487, Cys483–Cys522, Cys508–Cys527, Cys532–Cys548, and Cys545–Cys555. Residue Ser399 is glycosylated (O-linked (Fuc...) serine). The interval 440 to 556 (KTQLEFMSQQ…VCGGDNSTCS (117 aa)) is cysteine-rich. The short motif at 498-500 (RGD) is the Cell attachment site element. N-linked (GlcNAc...) asparagine glycans are attached at residues Asn552, Asn579, and Asn614. The tract at residues 556-685 (SPRKGSFTAG…TYFQPKPRQA (130 aa)) is spacer. An N-linked (GlcNAc...) (complex) asparagine glycan is attached at Asn667. TSP type-1 domains lie at 682-730 (PRQA…SQQP), 742-805 (CPPY…QPCP), 808-859 (WEVS…PEPC), 896-950 (VWTP…QAVP), 951-1011 (CPAR…SLEP), 1012-1068 (CPPR…VPCL), and 1072-1131 (CTYR…GPCV). O-linked (Fuc...) serine glycosylation is present at Ser698. Residue Asn707 is glycosylated (N-linked (GlcNAc...) (complex) asparagine). The O-linked (Fuc...) serine glycan is linked to Ser757. Asn828 carries N-linked (GlcNAc...) asparagine glycosylation. 4 O-linked (Fuc...) serine glycosylation sites follow: Ser907, Ser965, Ser1027, and Ser1087. CUB domains lie at 1192–1298 (CGRQ…FYRE) and 1299–1427 (CDMQ…KEGT). 2 N-linked (GlcNAc...) asparagine glycosylation sites follow: Asn1235 and Asn1354.

Zn(2+) serves as cofactor. The cofactor is Ca(2+). Post-translationally, glycosylated. O-fucosylated by POFUT2 on a serine or a threonine residue found within the consensus sequence C1-X(2)-(S/T)-C2-G of the TSP type-1 repeat domains where C1 and C2 are the first and second cysteine residue of the repeat, respectively. Fucosylated repeats can then be further glycosylated by the addition of a beta-1,3-glucose residue by the glucosyltransferase, B3GALTL. Fucosylation mediates the efficient secretion of ADAMTS13. May also be C-glycosylated on tryptophan residues within the consensus sequence W-X-X-W of the TPRs, and also N-glycosylated. These other glycosylations can also facilitate secretion. In terms of processing, the precursor is processed by a furin endopeptidase which cleaves off the pro-domain. Plasma. Expressed primarily in liver.

It is found in the secreted. The enzyme catalyses The enzyme cleaves the von Willebrand factor at bond 842-Tyr-|-Met-843 within the A2 domain.. Zinc and calcium ions cooperatively modulate enzyme activity. The cleavage of the pro-domain is not required for protease activity. Dependence on calcium for proteolytic activity is mediated by the high affinity site. Cleaves the vWF multimers in plasma into smaller forms thereby controlling vWF-mediated platelet thrombus formation. This Homo sapiens (Human) protein is A disintegrin and metalloproteinase with thrombospondin motifs 13 (ADAMTS13).